Consider the following 161-residue polypeptide: V-type proton ATPase 16 kDa proteolipid subunit c (161 aa).

At 1-15 (MSYDLATAERAAYAP) the chain is on the lumenal side. A helical transmembrane segment spans residues 16–36 (FFGYMGAASAQIFTVLGAAYG). Residues 37–58 (TAKSAVGISSMGVMRPELIMKS) are Cytoplasmic-facing. Residues 59-79 (VIPVIMAGIIGIYGLVVAMVL) form a helical membrane-spanning segment. Residues 80–98 (RGKVTSASAGYTLDKGFAH) are Lumenal-facing. Residues 99–119 (LAAGLTCGLCGLGAGYAIGIV) form a helical membrane-spanning segment. Over 120-137 (GDAGVRGTAQQPRLFVGM) the chain is Cytoplasmic. Residues 138 to 158 (ILILIFSEVLGLYGMIVALIL) form a helical membrane-spanning segment. Residues 159–161 (GTS) are Lumenal-facing.

Belongs to the V-ATPase proteolipid subunit family. As to quaternary structure, V-ATPase is a heteromultimeric enzyme made up of two complexes: the ATP-hydrolytic V1 complex and the proton translocation V0 complex. The V1 complex consists of three catalytic AB heterodimers that form a heterohexamer, three peripheral stalks each consisting of EG heterodimers, one central rotor including subunits D and F, and the regulatory subunits C and H. The proton translocation complex V0 consists of the proton transport subunit a, a ring of proteolipid subunits c9c'', rotary subunit d, subunits e and f, and the accessory subunits vah-19/Ac45 and vah-20/PRR.

The protein localises to the membrane. In terms of biological role, proton-conducting pore forming subunit of the V0 complex of vacuolar(H+)-ATPase (V-ATPase), a multisubunit enzyme composed of a peripheral complex (V1) that hydrolyzes ATP and a membrane integral complex (V0) that translocates protons. V-ATPase is responsible for acidifying and maintaining the pH of intracellular compartments and in some cell types, is targeted to the plasma membrane, where it is responsible for acidifying the extracellular environment. In Ascaris suum (Pig roundworm), this protein is V-type proton ATPase 16 kDa proteolipid subunit c (12).